The following is a 442-amino-acid chain: ATP-dependent protease ATPase subunit HslU (442 aa).

Residues Ile-18, 60-65 (GVGKTE), Asp-255, Glu-320, and Arg-392 each bind ATP.

Belongs to the ClpX chaperone family. HslU subfamily. As to quaternary structure, a double ring-shaped homohexamer of HslV is capped on each side by a ring-shaped HslU homohexamer. The assembly of the HslU/HslV complex is dependent on binding of ATP.

The protein localises to the cytoplasm. ATPase subunit of a proteasome-like degradation complex; this subunit has chaperone activity. The binding of ATP and its subsequent hydrolysis by HslU are essential for unfolding of protein substrates subsequently hydrolyzed by HslV. HslU recognizes the N-terminal part of its protein substrates and unfolds these before they are guided to HslV for hydrolysis. The sequence is that of ATP-dependent protease ATPase subunit HslU from Aeromonas hydrophila subsp. hydrophila (strain ATCC 7966 / DSM 30187 / BCRC 13018 / CCUG 14551 / JCM 1027 / KCTC 2358 / NCIMB 9240 / NCTC 8049).